Consider the following 36-residue polypeptide: Photosystem I reaction center subunit VIII (36 aa).

A helical membrane pass occupies residues 6–26 (LPSIFVPLVGLVFPAIAMASL).

This sequence belongs to the PsaI family.

Its subcellular location is the plastid. The protein localises to the chloroplast thylakoid membrane. May help in the organization of the PsaL subunit. In Liriodendron tulipifera (Tuliptree), this protein is Photosystem I reaction center subunit VIII.